The primary structure comprises 283 residues: 4-diphosphocytidyl-2-C-methyl-D-erythritol kinase (283 aa).

Lys-8 is an active-site residue. Residue 90–100 (PIGSGLAGGSS) participates in ATP binding. Residue Asp-132 is part of the active site.

Belongs to the GHMP kinase family. IspE subfamily.

It catalyses the reaction 4-CDP-2-C-methyl-D-erythritol + ATP = 4-CDP-2-C-methyl-D-erythritol 2-phosphate + ADP + H(+). It participates in isoprenoid biosynthesis; isopentenyl diphosphate biosynthesis via DXP pathway; isopentenyl diphosphate from 1-deoxy-D-xylulose 5-phosphate: step 3/6. Its function is as follows. Catalyzes the phosphorylation of the position 2 hydroxy group of 4-diphosphocytidyl-2C-methyl-D-erythritol. The protein is 4-diphosphocytidyl-2-C-methyl-D-erythritol kinase of Chlamydia muridarum (strain MoPn / Nigg).